The sequence spans 401 residues: Large ribosomal subunit protein uL3 (401 aa).

Positions Met-1 to Ser-22 are disordered.

Belongs to the universal ribosomal protein uL3 family.

The protein resides in the cytoplasm. Functionally, the L3 protein is a component of the large subunit of cytoplasmic ribosomes. The polypeptide is Large ribosomal subunit protein uL3 (rpl-3) (Caenorhabditis elegans).